We begin with the raw amino-acid sequence, 397 residues long: Argininosuccinate synthase (397 aa).

9–17 (AYSGGLDTS) lines the ATP pocket. Tyrosine 85 is an L-citrulline binding site. Glycine 115 is an ATP binding site. L-aspartate is bound by residues threonine 117, asparagine 121, and aspartate 122. Asparagine 121 contacts L-citrulline. L-citrulline-binding residues include arginine 125, serine 173, glutamate 258, and tyrosine 270.

Belongs to the argininosuccinate synthase family. Type 1 subfamily. Homotetramer.

Its subcellular location is the cytoplasm. The enzyme catalyses L-citrulline + L-aspartate + ATP = 2-(N(omega)-L-arginino)succinate + AMP + diphosphate + H(+). Its pathway is amino-acid biosynthesis; L-arginine biosynthesis; L-arginine from L-ornithine and carbamoyl phosphate: step 2/3. The chain is Argininosuccinate synthase from Streptococcus suis (strain 05ZYH33).